Here is a 209-residue protein sequence, read N- to C-terminus: Potassium-transporting ATPase KdpC subunit (209 aa).

Residues 10-30 (VISLVFLFVLGFLFPTVTSLI) form a helical membrane-spanning segment.

Belongs to the KdpC family. In terms of assembly, the system is composed of three essential subunits: KdpA, KdpB and KdpC.

It localises to the cell membrane. In terms of biological role, part of the high-affinity ATP-driven potassium transport (or Kdp) system, which catalyzes the hydrolysis of ATP coupled with the electrogenic transport of potassium into the cytoplasm. This subunit acts as a catalytic chaperone that increases the ATP-binding affinity of the ATP-hydrolyzing subunit KdpB by the formation of a transient KdpB/KdpC/ATP ternary complex. This Thermoplasma volcanium (strain ATCC 51530 / DSM 4299 / JCM 9571 / NBRC 15438 / GSS1) protein is Potassium-transporting ATPase KdpC subunit.